A 122-amino-acid chain; its full sequence is Cupin 2 conserved barrel domain-containing protein (122 aa).

Positions 55–119 (PGGVTTAEDH…DSPVEIVSIW (65 aa)) are cupin 2 conserved barrel. 4 residues coordinate Zn(2+): aspartate 63, histidine 65, glutamate 69, and histidine 103.

Zn(2+) serves as cofactor.

The catalysed reaction is N(6)-hydroxy-L-lysine + L-glutamate + ATP = 1-L-glutamo-2-N(6-)L-lysinohydrazine + AMP + diphosphate + 2 H(+). Its activity is regulated as follows. Inhibited by 1,10-phenanthroline (OP). Functionally, catalyzes hydrazine (N-N) bond formation from an unstable ester intermediate, the product of the ATP-dependent condensation of L-N(6)-OH-lysine and L-glutamine substrates by a methionyl-tRNA synthase-like protein. This chain is Cupin 2 conserved barrel domain-containing protein, found in Rhodococcus jostii (strain RHA1).